A 393-amino-acid chain; its full sequence is 1-deoxy-D-xylulose 5-phosphate reductoisomerase (393 aa).

The NADPH site is built by Thr-10, Gly-11, Ser-12, Ile-13, Gln-38, and Asn-124. 1-deoxy-D-xylulose 5-phosphate is bound at residue Lys-125. Glu-126 serves as a coordination point for NADPH. Position 150 (Asp-150) interacts with Mn(2+). 1-deoxy-D-xylulose 5-phosphate-binding residues include Ser-151, Glu-152, Ser-179, and His-202. Glu-152 contacts Mn(2+). Gly-208 is an NADPH binding site. Residues Ser-215, Asn-220, Lys-221, and Glu-224 each contribute to the 1-deoxy-D-xylulose 5-phosphate site. Glu-224 contributes to the Mn(2+) binding site.

Belongs to the DXR family. Requires Mg(2+) as cofactor. Mn(2+) serves as cofactor.

The enzyme catalyses 2-C-methyl-D-erythritol 4-phosphate + NADP(+) = 1-deoxy-D-xylulose 5-phosphate + NADPH + H(+). It participates in isoprenoid biosynthesis; isopentenyl diphosphate biosynthesis via DXP pathway; isopentenyl diphosphate from 1-deoxy-D-xylulose 5-phosphate: step 1/6. Its function is as follows. Catalyzes the NADPH-dependent rearrangement and reduction of 1-deoxy-D-xylulose-5-phosphate (DXP) to 2-C-methyl-D-erythritol 4-phosphate (MEP). This chain is 1-deoxy-D-xylulose 5-phosphate reductoisomerase, found in Ralstonia nicotianae (strain ATCC BAA-1114 / GMI1000) (Ralstonia solanacearum).